Consider the following 205-residue polypeptide: Glycerol-3-phosphate acyltransferase (205 aa).

Residues 1 to 3 (MSA) lie on the Periplasmic side of the membrane. Residues 4–24 (IAPGMILFAYLCGSISSAILV) traverse the membrane as a helical segment. The Cytoplasmic portion of the chain corresponds to 25–52 (CRLCGLPDPRTSGSGNPGATNVLRMGGK). The chain crosses the membrane as a helical span at residues 53 to 73 (GAALAVLIFDVLKGMLPVWGA). At 74–80 (YELGVSP) the chain is on the periplasmic side. A helical transmembrane segment spans residues 81-101 (FWLGLIAIAACLGHIWPIFFG). At 102-111 (FKGGKGVATA) the chain is on the cytoplasmic side. Residues 112–132 (FGAIAPIGWDLTGVMAGTWLL) traverse the membrane as a helical segment. Topologically, residues 133–137 (TVLLS) are periplasmic. A helical transmembrane segment spans residues 138 to 158 (GYSSLGAIVSALIAPFYVWWF). At 159-205 (KPQFTFPVSMLSCLILLRHHDNIQRLWRRQETKIWTKLKRKREKDPE) the chain is on the cytoplasmic side.

Belongs to the PlsY family. Probably interacts with PlsX.

It localises to the cell inner membrane. The catalysed reaction is sn-glycerol 3-phosphate + an acyl-CoA = a 1-acyl-sn-glycero-3-phosphate + CoA. It catalyses the reaction a fatty acyl-[ACP] + sn-glycerol 3-phosphate = a 1-acyl-sn-glycero-3-phosphate + holo-[ACP]. It functions in the pathway lipid metabolism; phospholipid metabolism. In terms of biological role, catalyzes the transfer of an acyl group from acyl-ACP to glycerol-3-phosphate (G3P) to form lysophosphatidic acid (LPA). This enzyme can also utilize acyl-CoA as fatty acyl donor, but not acyl-PO(4). This is Glycerol-3-phosphate acyltransferase from Escherichia fergusonii (strain ATCC 35469 / DSM 13698 / CCUG 18766 / IAM 14443 / JCM 21226 / LMG 7866 / NBRC 102419 / NCTC 12128 / CDC 0568-73).